The primary structure comprises 273 residues: MARNGSLEEFLGVAVDAAKRAGEIIRKGFHETKHVVHKGQVDLVTETDKACEDLIFNHLKQHFPSHKFIGEETSAATGDFDLTDEPTWIVDPVDGTTNFVHGFPSVCVSIGLTIGKIPTVGVVYDPIIDELFTGINGKGAYLNGKPIKVSSQSELVKSLLGTEVGTTRDNLTVETTTRRINNLLFKVRSLRMCGSCALDLCWVACGRLELFYLIGYGGPWDVAGGAVIVKEAGGVLFDPSGSEFDITSQRVAATNPHLKEAFVEALQLSEYVS.

Glu-71, Asp-91, Val-93, and Asp-94 together coordinate Mg(2+). Glu-71 is a binding site for substrate. Substrate is bound by residues 93–96, 194–196, and Asp-221; these read VDGT and GSC. A Mg(2+)-binding site is contributed by Asp-221.

It belongs to the inositol monophosphatase superfamily. It depends on Mg(2+) as a cofactor. As to expression, expressed in seedlings, flowers, young and matures green fruits. Detected in roots and stems.

The catalysed reaction is a myo-inositol phosphate + H2O = myo-inositol + phosphate. It participates in polyol metabolism; myo-inositol biosynthesis; myo-inositol from D-glucose 6-phosphate: step 2/2. In terms of biological role, responsible for the provision of inositol required for synthesis of phosphatidylinositol and polyphosphoinositides. The sequence is that of Inositol monophosphatase 1 (IMP1) from Solanum lycopersicum (Tomato).